The primary structure comprises 557 residues: Nucleoporin AMO1 (557 aa).

The C3H1-type zinc finger occupies 1–25 (MTVCRFWQQGYCRNGNACKFEHPPK). The stretch at 114-141 (QGALNEIQAAYQAAQQQIQNTLQNIPAA) forms a coiled coil. The tract at residues 161–297 (ESSKGSSTGG…SALGPKPGAF (137 aa)) is disordered. 10 SXFG repeats span residues 171–174 (SVFG), 200–203 (SAFG), 213–216 (SAFG), 228–231 (SAFG), 240–243 (SAFG), 249–252 (STFG), 262–265 (SAFG), 282–285 (SAFG), 303–306 (SAFG), and 314–317 (SPFG). Residues 195 to 215 (STPSTSAFGQPSPLGQKSSAF) show a composition bias toward polar residues. Over residues 243–253 (GSPQTGSTFGQ) the composition is skewed to polar residues. Residues 315–463 (PFGAAAQATQ…DLLSYATKNP (149 aa)) form a disordered region. 2 stretches are compositionally biased toward polar residues: residues 321 to 338 (QATQ…QAAN) and 351 to 366 (GQPS…GQPS). SXFG repeat units follow at residues 348–351 (SAFG), 370–373 (SAFG), 387–390 (SLFG), and 407–410 (SAFG). The segment covering 367-385 (TQSSAFGQQQPQQAGTFGS) has biased composition (low complexity). Residues 388–429 (LFGQQQQQPSNVFGQPSTTSAFGSQAATSGFSQLGNATSTIG) are compositionally biased toward polar residues. Residues 430–443 (ASPAGAQAPASKSP) show a composition bias toward low complexity.

As to quaternary structure, the nuclear pore complex (NPC) constitutes the exclusive means of nucleocytoplasmic transport. NPCs allow the passive diffusion of ions and small molecules and the active, nuclear transport receptor-mediated bidirectional transport of macromolecules such as proteins, RNAs, ribonucleoparticles (RNPs), and ribosomal subunits across the nuclear envelope. The 55-60 MDa NPC is composed of at least 28 different subunits: AMO1, ELYS, GLE1, GLE2, MLP1, NDC1, NIC96, NSP1, NUP133, NUP145, NUP152, NUP159, NUP170, NUP188, NUP192, NUP37, NUP49, NUP53, NUP56, NUP57, NUP82, NUP84, NUP85, POM152, POM33, POM34, SEC13 and SEH1. Due to its 8-fold rotational symmetry, all subunits are present with 8 copies or multiples thereof.

It localises to the nucleus. Its subcellular location is the nuclear pore complex. It is found in the nucleus membrane. Functions as a component of the nuclear pore complex (NPC). NPC components, collectively referred to as nucleoporins (NUPs), can play the role of both NPC structural components and of docking or interaction partners for transiently associated nuclear transport factors. Active directional transport is assured by both, a Phe-Gly (FG) repeat affinity gradient for these transport factors across the NPC and a transport cofactor concentration gradient across the nuclear envelope (GSP1 and GSP2 GTPases associated predominantly with GTP in the nucleus, with GDP in the cytoplasm). AMO1 is specifically important for nuclear protein and mRNA export. The sequence is that of Nucleoporin AMO1 (AMO1) from Chaetomium thermophilum (strain DSM 1495 / CBS 144.50 / IMI 039719) (Thermochaetoides thermophila).